Reading from the N-terminus, the 104-residue chain is Zinc-containing ferredoxin-1 (104 aa).

The tract at residues 2 to 37 (GIDPNYRTNRQVVGEHSGHKVYGPVEPPKVLGIHGT) is N-terminal extension. Zn(2+) contacts are provided by His-17 and His-20. An N6-methyllysine modification is found at Lys-30. His-35 contributes to the Zn(2+) binding site. 2 consecutive 4Fe-4S ferredoxin-type domains span residues 38 to 66 (IVGV…WYDT) and 75 to 104 (KADP…VKPP). The [3Fe-4S] cluster site is built by Cys-46 and Cys-52. Cys-56 provides a ligand contact to [4Fe-4S] cluster. Asp-77 serves as a coordination point for Zn(2+). The [4Fe-4S] cluster site is built by Cys-84, Cys-87, and Cys-90. Residue Cys-94 coordinates [3Fe-4S] cluster.

Requires [3Fe-4S] cluster as cofactor. The cofactor is [4Fe-4S] cluster. It depends on Zn(2+) as a cofactor.

Its function is as follows. Ferredoxins are iron-sulfur proteins that transfer electrons in a wide variety of metabolic reactions. In Sulfurisphaera tokodaii (strain DSM 16993 / JCM 10545 / NBRC 100140 / 7) (Sulfolobus tokodaii), this protein is Zinc-containing ferredoxin-1 (zfx1).